The chain runs to 340 residues: Delta-aminolevulinic acid dehydratase (340 aa).

3 residues coordinate Zn(2+): C133, C135, and C143. The active-site Schiff-base intermediate with substrate is the K210. Positions 220 and 232 each coordinate 5-aminolevulinate. Catalysis depends on K263, which acts as the Schiff-base intermediate with substrate. 2 residues coordinate 5-aminolevulinate: S290 and Y329.

Belongs to the ALAD family. In terms of assembly, homooctamer. The cofactor is Zn(2+).

It catalyses the reaction 2 5-aminolevulinate = porphobilinogen + 2 H2O + H(+). It participates in porphyrin-containing compound metabolism; protoporphyrin-IX biosynthesis; coproporphyrinogen-III from 5-aminolevulinate: step 1/4. In terms of biological role, catalyzes an early step in the biosynthesis of tetrapyrroles. Binds two molecules of 5-aminolevulinate per subunit, each at a distinct site, and catalyzes their condensation to form porphobilinogen. This chain is Delta-aminolevulinic acid dehydratase (HEM2), found in Candida glabrata (strain ATCC 2001 / BCRC 20586 / JCM 3761 / NBRC 0622 / NRRL Y-65 / CBS 138) (Yeast).